The sequence spans 93 residues: UPF0369 protein RC0209 (93 aa).

Residues 1–24 (MDDKKDNRHLSKPAYREECTGDTE) are disordered. Residues 8–55 (RHLSKPAYREECTGDTERSTTAYMDILEDVSTGSTSKLPLEAKFVKIS) form the RPE1 insert domain.

This sequence belongs to the SDHAF4 family.

This is UPF0369 protein RC0209 from Rickettsia conorii (strain ATCC VR-613 / Malish 7).